A 125-amino-acid chain; its full sequence is Outer membrane protein assembly factor BamE (125 aa).

Residues 1–17 form the signal peptide; it reads MNKTLILALSALLGLAA. A lipid anchor (N-palmitoyl cysteine) is attached at cysteine 18. Cysteine 18 is lipidated: S-diacylglycerol cysteine.

The protein belongs to the BamE family. In terms of assembly, part of the Bam complex.

Its subcellular location is the cell outer membrane. Functionally, part of the outer membrane protein assembly complex, which is involved in assembly and insertion of beta-barrel proteins into the outer membrane. This chain is Outer membrane protein assembly factor BamE, found in Neisseria meningitidis serogroup B (strain ATCC BAA-335 / MC58).